The sequence spans 215 residues: Large ribosomal subunit protein uL4 (215 aa).

The interval 46–72 is disordered; the sequence is TAKSKNRAEVSGGGRKPWAQKGGGRAR. Residues 56 to 71 are compositionally biased toward gly residues; it reads SGGGRKPWAQKGGGRA.

This sequence belongs to the universal ribosomal protein uL4 family. In terms of assembly, part of the 50S ribosomal subunit.

In terms of biological role, one of the primary rRNA binding proteins, this protein initially binds near the 5'-end of the 23S rRNA. It is important during the early stages of 50S assembly. It makes multiple contacts with different domains of the 23S rRNA in the assembled 50S subunit and ribosome. Its function is as follows. Forms part of the polypeptide exit tunnel. The chain is Large ribosomal subunit protein uL4 from Helicobacter pylori (strain ATCC 700392 / 26695) (Campylobacter pylori).